The chain runs to 720 residues: Denticleless protein homolog (720 aa).

3 WD repeats span residues glycine 43–leucine 85, alanine 92–isoleucine 131, and glycine 134–phenylalanine 174. The DDB1-binding motif signature appears at tryptophan 164–arginine 167. The Nuclear localization signal motif lies at proline 193–arginine 200. WD repeat units follow at residues aspartate 211–arginine 250, threonine 266–valine 305, glycine 310–arginine 351, and glycine 355–lysine 395. The DDB1-binding motif motif lies at tryptophan 240 to arginine 243. Disordered stretches follow at residues lysine 411–proline 437, proline 476–lysine 495, glutamine 528–leucine 552, and asparagine 607–lysine 698. The span at glutamine 528–serine 542 shows a compositional bias: polar residues. Composition is skewed to basic and acidic residues over residues glutamine 543–leucine 552 and cysteine 642–asparagine 660.

Belongs to the WD repeat cdt2 family. In terms of assembly, component of the DCX(DTL) E3 ubiquitin ligase complex, at least composed of CUL4 (CUL4A or CUL4B), DDB1, DTL/CDT2 and RBX1.

The protein localises to the nucleus. It is found in the cytoplasm. It localises to the cytoskeleton. The protein resides in the microtubule organizing center. Its subcellular location is the centrosome. The protein localises to the chromosome. The protein operates within protein modification; protein ubiquitination. In terms of biological role, substrate-specific adapter of a DCX (DDB1-CUL4-X-box) E3 ubiquitin-protein ligase complex required for cell cycle control, DNA damage response and translesion DNA synthesis. The DCX(DTL) complex, also named CRL4(CDT2) complex, mediates the polyubiquitination and subsequent degradation of CDT1, CDKN1A/p21(CIP1), KMT5A and SDE2. CDT1 degradation in response to DNA damage is necessary to ensure proper cell cycle regulation of DNA replication. CDKN1A/p21(CIP1) degradation during S phase or following UV irradiation is essential to control replication licensing. KMT5A degradation is also important for a proper regulation of mechanisms such as TGF-beta signaling, cell cycle progression, DNA repair and cell migration. Most substrates require their interaction with PCNA for their polyubiquitination: substrates interact with PCNA via their PIP-box, and those containing the 'K+4' motif in the PIP box, recruit the DCX(DTL) complex, leading to their degradation. In undamaged proliferating cells, the DCX(DTL) complex also promotes the 'Lys-164' monoubiquitination of PCNA, thereby being involved in PCNA-dependent translesion DNA synthesis. May play a role in the regulation of the circadian clock. This is Denticleless protein homolog (DTL) from Gallus gallus (Chicken).